Here is a 183-residue protein sequence, read N- to C-terminus: Dual specificity protein phosphatase 22-B (183 aa).

The 141-residue stretch at 4 to 144 folds into the Tyrosine-protein phosphatase domain; that stretch reads GINKVLPDLY…LQEFQTGELQ (141 aa). Cys88 functions as the Phosphocysteine intermediate in the catalytic mechanism.

The protein belongs to the protein-tyrosine phosphatase family. Non-receptor class dual specificity subfamily.

It is found in the cytoplasm. The protein localises to the nucleus. It carries out the reaction O-phospho-L-tyrosyl-[protein] + H2O = L-tyrosyl-[protein] + phosphate. It catalyses the reaction O-phospho-L-seryl-[protein] + H2O = L-seryl-[protein] + phosphate. The catalysed reaction is O-phospho-L-threonyl-[protein] + H2O = L-threonyl-[protein] + phosphate. Functionally, activates the Jnk signaling pathway. Dephosphorylates and deactivates p38 and stress-activated protein kinase/c-Jun N-terminal kinase (SAPK/JNK). The chain is Dual specificity protein phosphatase 22-B (dusp22b) from Danio rerio (Zebrafish).